We begin with the raw amino-acid sequence, 2280 residues long: Protein Ycf2 (2280 aa).

1631-1638 (GSIGTGRS) is an ATP binding site.

The protein belongs to the Ycf2 family.

The protein localises to the plastid. It localises to the chloroplast stroma. In terms of biological role, probable ATPase of unknown function. Its presence in a non-photosynthetic plant (Epifagus virginiana) and experiments in tobacco indicate that it has an essential function which is probably not related to photosynthesis. This is Protein Ycf2 (ycf2-A) from Nicotiana tabacum (Common tobacco).